Reading from the N-terminus, the 250-residue chain is Cobalt transport protein CbiM (250 aa).

An N-terminal signal peptide occupies residues 1–25 (MKQNIKLGVIAALMLIVLTPVTSNA). The next 6 helical transmembrane spans lie at 33-53 (LPVK…LVGL), 68-88 (VLLA…IPSV), 100-120 (LGAI…VLIF), 132-152 (TLGA…FLIF), 163-183 (AMPV…VTSI), and 205-225 (GIFF…TVIV).

It belongs to the CbiM family. As to quaternary structure, forms an energy-coupling factor (ECF) transporter complex composed of an ATP-binding protein (A component, CbiO), a transmembrane protein (T component, CbiQ) and 2 possible substrate-capture proteins (S components, CbiM and CbiN) of unknown stoichimetry.

The protein localises to the cell membrane. It functions in the pathway cofactor biosynthesis; adenosylcobalamin biosynthesis. Functionally, part of the energy-coupling factor (ECF) transporter complex CbiMNOQ involved in cobalt import. The sequence is that of Cobalt transport protein CbiM from Clostridioides difficile (strain R20291) (Peptoclostridium difficile).